A 135-amino-acid chain; its full sequence is Insoluble matrix shell protein 5 (135 aa).

The N-terminal stretch at 1–16 (MILVVTLACLIAVVCC) is a signal peptide. EF-hand domains follow at residues 21–56 (TDQG…ADLN) and 93–128 (IEFV…TVRP). Positions 34, 36, 38, 40, 45, 106, 108, 110, 112, and 117 each coordinate Ca(2+).

In terms of tissue distribution, component of the acid-insoluble organic matrix of the calcified shell.

Its subcellular location is the secreted. This Ruditapes philippinarum (Japanese carpet shell) protein is Insoluble matrix shell protein 5.